Here is a 104-residue protein sequence, read N- to C-terminus: Met repressor (104 aa).

It belongs to the MetJ family. In terms of assembly, homodimer.

It localises to the cytoplasm. This regulatory protein, when combined with SAM (S-adenosylmethionine) represses the expression of the methionine regulon and of enzymes involved in SAM synthesis. This Shewanella oneidensis (strain ATCC 700550 / JCM 31522 / CIP 106686 / LMG 19005 / NCIMB 14063 / MR-1) protein is Met repressor.